Here is a 180-residue protein sequence, read N- to C-terminus: ATP synthase subunit b 2 (180 aa).

The helical transmembrane segment at 33 to 53 threads the bilayer; sequence IFWLLVTLVAIYFLLTRVALP.

Belongs to the ATPase B chain family. As to quaternary structure, F-type ATPases have 2 components, F(1) - the catalytic core - and F(0) - the membrane proton channel. F(1) has five subunits: alpha(3), beta(3), gamma(1), delta(1), epsilon(1). F(0) has three main subunits: a(1), b(2) and c(10-14). The alpha and beta chains form an alternating ring which encloses part of the gamma chain. F(1) is attached to F(0) by a central stalk formed by the gamma and epsilon chains, while a peripheral stalk is formed by the delta and b chains.

Its subcellular location is the cell inner membrane. F(1)F(0) ATP synthase produces ATP from ADP in the presence of a proton or sodium gradient. F-type ATPases consist of two structural domains, F(1) containing the extramembraneous catalytic core and F(0) containing the membrane proton channel, linked together by a central stalk and a peripheral stalk. During catalysis, ATP synthesis in the catalytic domain of F(1) is coupled via a rotary mechanism of the central stalk subunits to proton translocation. Its function is as follows. Component of the F(0) channel, it forms part of the peripheral stalk, linking F(1) to F(0). The b'-subunit is a diverged and duplicated form of b found in plants and photosynthetic bacteria. The protein is ATP synthase subunit b 2 (atpF2) of Cereibacter sphaeroides (strain ATCC 17025 / ATH 2.4.3) (Rhodobacter sphaeroides).